The following is a 147-amino-acid chain: Hemoglobin subunit beta-Y (147 aa).

The Globin domain maps to 3 to 147 (HFTAEEKAAI…VANALSLKYH (145 aa)). The heme b site is built by His-64 and His-93.

The protein belongs to the globin family. In terms of assembly, heterotetramer of two alpha chains and two beta chains.

Functionally, this is a minor early embryonic beta chain. The protein is Hemoglobin subunit beta-Y (HBBY) of Mesocricetus auratus (Golden hamster).